A 78-amino-acid polypeptide reads, in one-letter code: Large ribosomal subunit protein bL28 (78 aa).

The protein belongs to the bacterial ribosomal protein bL28 family.

The protein is Large ribosomal subunit protein bL28 of Marinobacter nauticus (strain ATCC 700491 / DSM 11845 / VT8) (Marinobacter aquaeolei).